The chain runs to 303 residues: Zinc transporter ZIP9-A (303 aa).

The chain crosses the membrane as a helical span at residues 7–27 (ISLLSLAMLVGCYVSGIIPLA). N29 carries N-linked (GlcNAc...) asparagine glycosylation. A run of 5 helical transmembrane segments spans residues 35–55 (LKLV…AVII), 102–122 (AYIG…DQIG), 142–162 (ITTT…LGAA), 172–192 (LIVF…LVSF), and 206–226 (HLLV…LGLS). N237 is a glycosylation site (N-linked (GlcNAc...) asparagine). 2 helical membrane passes run 240-260 (GVAM…HVLP) and 282-302 (LEVC…IGHQ).

This sequence belongs to the ZIP transporter (TC 2.A.5) family.

The protein resides in the golgi apparatus. It is found in the trans-Golgi network membrane. Its subcellular location is the cell membrane. The protein localises to the cytoplasm. It localises to the perinuclear region. The protein resides in the mitochondrion. It is found in the nucleus. It carries out the reaction Zn(2+)(in) = Zn(2+)(out). In terms of biological role, transports zinc ions across cell and organelle membranes into the cytoplasm and regulates intracellular zinc homeostasis. Participates in the zinc ions efflux out of the secretory compartments. Regulates intracellular zinc level, resulting in the enhancement of AKT1 and MAPK3/MAPK1 (Erk1/2) phosphorylation in response to the BCR activation. Also functions as a membrane androgen receptor that mediates, through a G protein, the non-classical androgen signaling pathway, characterized by the activation of MAPK3/MAPK1 (Erk1/2) and transcription factors CREB1 or ATF1. Moreover, has dual functions as a membrane-bound androgen receptor and as an androgen-dependent zinc transporter both of which are mediated through an inhibitory G protein (Gi) that mediates both MAP kinase and zinc signaling leading to the androgen-dependent apoptotic process. The chain is Zinc transporter ZIP9-A (slc39a9-a) from Xenopus laevis (African clawed frog).